Here is a 512-residue protein sequence, read N- to C-terminus: Cytochrome P450 monooxygenase ABA1 (512 aa).

The chain crosses the membrane as a helical span at residues histidine 13–isoleucine 32. Residue cysteine 458 participates in heme binding.

It belongs to the cytochrome P450 family. The cofactor is heme.

The protein resides in the membrane. Its pathway is hormone biosynthesis. Cytochrome P450 monooxygenase involved in the biosynthesis of abscisic acid (ABA), a phytohormone that acts antagonistically toward salicylic acid (SA), jasmonic acid (JA) and ethylene (ETH) signaling, to impede plant defense responses. During pathogen-host interaction, ABA plays a dual role in disease severity by increasing plant susceptibility and accelerating pathogenesis in the fungus itself. The first step of the pathway catalyzes the reaction from farnesyl diphosphate to alpha-ionylideneethane performed by the alpha-ionylideneethane synthase ABA3 via a three-step reaction mechanism involving 2 neutral intermediates, beta-farnesene and allofarnesene. The cytochrome P450 monooxygenase ABA1 might then be involved in the conversion of alpha-ionylideneethane to alpha-ionylideneacetic acid. Alpha-ionylideneacetic acid is further converted to abscisic acid in 2 steps involving the cytochrome P450 monooxygenase ABA2 and the short-chain dehydrogenase/reductase ABA4, via the intermediates 1'-deoxy-ABA or 1',4'-trans-diol-ABA, depending on the order of action of these 2 enzymes. ABA2 is responsible for the hydroxylation of carbon atom C-1' and ABA4 might be involved in the oxidation of the C-4' carbon atom. The sequence is that of Cytochrome P450 monooxygenase ABA1 from Pyricularia oryzae (strain Y34) (Rice blast fungus).